A 290-amino-acid polypeptide reads, in one-letter code: 4-hydroxy-tetrahydrodipicolinate synthase (290 aa).

T44 contacts pyruvate. Y132 (proton donor/acceptor) is an active-site residue. The active-site Schiff-base intermediate with substrate is K160. Residue I202 coordinates pyruvate.

This sequence belongs to the DapA family. As to quaternary structure, homotetramer; dimer of dimers.

Its subcellular location is the cytoplasm. It carries out the reaction L-aspartate 4-semialdehyde + pyruvate = (2S,4S)-4-hydroxy-2,3,4,5-tetrahydrodipicolinate + H2O + H(+). Its pathway is amino-acid biosynthesis; L-lysine biosynthesis via DAP pathway; (S)-tetrahydrodipicolinate from L-aspartate: step 3/4. In terms of biological role, catalyzes the condensation of (S)-aspartate-beta-semialdehyde [(S)-ASA] and pyruvate to 4-hydroxy-tetrahydrodipicolinate (HTPA). This Legionella pneumophila (strain Corby) protein is 4-hydroxy-tetrahydrodipicolinate synthase.